The following is a 463-amino-acid chain: UDP-N-acetylmuramoylalanine--D-glutamate ligase (463 aa).

ATP is bound at residue 116–122 (GTNGKTT).

This sequence belongs to the MurCDEF family.

The protein localises to the cytoplasm. It catalyses the reaction UDP-N-acetyl-alpha-D-muramoyl-L-alanine + D-glutamate + ATP = UDP-N-acetyl-alpha-D-muramoyl-L-alanyl-D-glutamate + ADP + phosphate + H(+). It functions in the pathway cell wall biogenesis; peptidoglycan biosynthesis. Its function is as follows. Cell wall formation. Catalyzes the addition of glutamate to the nucleotide precursor UDP-N-acetylmuramoyl-L-alanine (UMA). The protein is UDP-N-acetylmuramoylalanine--D-glutamate ligase of Synechococcus elongatus (strain ATCC 33912 / PCC 7942 / FACHB-805) (Anacystis nidulans R2).